Here is a 135-residue protein sequence, read N- to C-terminus: CTP pyrophosphohydrolase (135 aa).

One can recognise a Nudix hydrolase domain in the interval 2–127 (KMIEVVAAII…DIPLLEAFMA (126 aa)). Substrate-binding positions include 34–39 (FAGGKV), R72, and D118. The Nudix box motif lies at 37–58 (GKVEPDESQRQALVRELREELG).

The protein belongs to the Nudix hydrolase family. In terms of assembly, monomer. Mg(2+) serves as cofactor. The cofactor is Mn(2+).

The enzyme catalyses CTP + H2O = CMP + diphosphate + H(+). It catalyses the reaction dCTP + H2O = dCMP + diphosphate + H(+). Hydrolase with a preference for pyrimidine substrates. Has high activity with 5-methyl-dCTP, and much lower activity with CTP, dCTP, 5-hydroxy-dCTP, 2-hydroxy-dATP and 8-hydroxy-dGTP. In Escherichia coli (strain K12), this protein is CTP pyrophosphohydrolase (nudG).